Here is a 273-residue protein sequence, read N- to C-terminus: tRNA pseudouridine synthase B (273 aa).

The active-site Nucleophile is D38.

This sequence belongs to the pseudouridine synthase TruB family. Type 1 subfamily.

It carries out the reaction uridine(55) in tRNA = pseudouridine(55) in tRNA. In terms of biological role, responsible for synthesis of pseudouridine from uracil-55 in the psi GC loop of transfer RNAs. The protein is tRNA pseudouridine synthase B of Sulfurimonas denitrificans (strain ATCC 33889 / DSM 1251) (Thiomicrospira denitrificans (strain ATCC 33889 / DSM 1251)).